A 513-amino-acid chain; its full sequence is ATP synthase subunit alpha (513 aa).

ATP is bound at residue 169–176; it reads GDRQTGKT.

Belongs to the ATPase alpha/beta chains family. In terms of assembly, F-type ATPases have 2 components, CF(1) - the catalytic core - and CF(0) - the membrane proton channel. CF(1) has five subunits: alpha(3), beta(3), gamma(1), delta(1), epsilon(1). CF(0) has three main subunits: a(1), b(2) and c(9-12). The alpha and beta chains form an alternating ring which encloses part of the gamma chain. CF(1) is attached to CF(0) by a central stalk formed by the gamma and epsilon chains, while a peripheral stalk is formed by the delta and b chains.

It localises to the cell inner membrane. It carries out the reaction ATP + H2O + 4 H(+)(in) = ADP + phosphate + 5 H(+)(out). Its function is as follows. Produces ATP from ADP in the presence of a proton gradient across the membrane. The alpha chain is a regulatory subunit. In Escherichia coli O81 (strain ED1a), this protein is ATP synthase subunit alpha.